The primary structure comprises 104 residues: Nucleoid-associated protein Amuc_1227 (104 aa).

Belongs to the YbaB/EbfC family. Homodimer.

The protein resides in the cytoplasm. The protein localises to the nucleoid. Its function is as follows. Binds to DNA and alters its conformation. May be involved in regulation of gene expression, nucleoid organization and DNA protection. The polypeptide is Nucleoid-associated protein Amuc_1227 (Akkermansia muciniphila (strain ATCC BAA-835 / DSM 22959 / JCM 33894 / BCRC 81048 / CCUG 64013 / CIP 107961 / Muc)).